Consider the following 355-residue polypeptide: Isopentenyl-diphosphate delta-isomerase (355 aa).

Substrate is bound at residue 9–10 (RK). Residues 67 to 69 (AIT), S97, and N125 contribute to the FMN site. 97-99 (SQR) contacts substrate. Residue Q161 coordinates substrate. E162 provides a ligand contact to Mg(2+). FMN-binding positions include K197, T227, 276–278 (GIR), and 297–298 (AL).

The protein belongs to the IPP isomerase type 2 family. Homooctamer. Dimer of tetramers. Requires FMN as cofactor. NADPH is required as a cofactor. It depends on Mg(2+) as a cofactor.

The protein resides in the cytoplasm. The enzyme catalyses isopentenyl diphosphate = dimethylallyl diphosphate. In terms of biological role, involved in the biosynthesis of isoprenoids. Catalyzes the 1,3-allylic rearrangement of the homoallylic substrate isopentenyl (IPP) to its allylic isomer, dimethylallyl diphosphate (DMAPP). The chain is Isopentenyl-diphosphate delta-isomerase from Methanococcus maripaludis (strain DSM 14266 / JCM 13030 / NBRC 101832 / S2 / LL).